The primary structure comprises 955 residues: Sex determination protein fruitless (955 aa).

Disordered regions lie at residues 1–55 and 70–89; these read MMAT…HAHS and IETDVRAPPPPLPPPPLPLP. Basic residues predominate over residues 35–55; the sequence is PHGHGHLHSHAHAHGHGHAHS. The segment covering 76-89 has biased composition (pro residues); that stretch reads APPPPLPPPPLPLP. Residues 131-196 enclose the BTB domain; it reads CDVTLACEGE…MYKGEVNVGQ (66 aa). Disordered regions lie at residues 229–288, 352–526, and 784–814; these read LRDS…SMSE, NRSA…LGGG, and ANHQLHQHPPSATHPSHSQSSPHYPSASGAG. The span at 233 to 246 shows a compositional bias: polar residues; the sequence is AASSPTGRGPSNYT. Composition is skewed to basic and acidic residues over residues 258–279 and 360–379; these read AMRESRDSLRSRCERDLRDELT and CSDRGSERGTLERTDSRDDL. Over residues 387–420 the composition is skewed to low complexity; sequence KDNNNSNSSSTGGNNNNNNNNNNNSSSNNNNSSS. Residues 421–446 are compositionally biased toward basic and acidic residues; the sequence is NRERNNSGERERERERERERDRDREL. Low complexity-rich tracts occupy residues 464–475 and 790–814; these read SSSNCDNSLSSS and QHPPSATHPSHSQSSPHYPSASGAG. The segment at 918–941 adopts a C2H2-type zinc-finger fold; the sequence is HECPVCGQKFTRRDNMKAHCKIKH.

As to expression, expressed in parts of the adult male brain associated with the courtship song and steps of the male courtship. Also expressed in the larval and pupal male mushroom body and optic lobe. Expressed in pupal female optic lobe.

Its subcellular location is the nucleus. In terms of biological role, probably acts as a transcriptional regulator. Part of the somatic sex determination hierarchy; sex determination genes transformer (tra) and transformer-2 (tra-2) switch fru splicing from the male-specific pattern to the female-specific pattern through activation of the female-specific fru 5'-splice site. Vital for the development of males and females. Controls the development of the male specific abdominal muscle of Lawrence. Plays a role in male courtship behavior and sexual orientation. Enhances male-specific expression of takeout in brain-associated fat body. In Drosophila melanogaster (Fruit fly), this protein is Sex determination protein fruitless (fru).